Consider the following 121-residue polypeptide: Large ribosomal subunit protein uL22 (121 aa).

The protein belongs to the universal ribosomal protein uL22 family. Part of the 50S ribosomal subunit.

This protein binds specifically to 23S rRNA; its binding is stimulated by other ribosomal proteins, e.g. L4, L17, and L20. It is important during the early stages of 50S assembly. It makes multiple contacts with different domains of the 23S rRNA in the assembled 50S subunit and ribosome. In terms of biological role, the globular domain of the protein is located near the polypeptide exit tunnel on the outside of the subunit, while an extended beta-hairpin is found that lines the wall of the exit tunnel in the center of the 70S ribosome. This chain is Large ribosomal subunit protein uL22, found in Parasynechococcus marenigrum (strain WH8102).